We begin with the raw amino-acid sequence, 850 residues long: Probable beta-glucosidase J (850 aa).

2 N-linked (GlcNAc...) asparagine glycosylation sites follow: N43 and N52. The active site involves D254. Positions 423–583 (TGERGYTFRV…DAETAIKQAV (161 aa)) constitute a PA14 domain. The N-linked (GlcNAc...) asparagine glycan is linked to N508.

This sequence belongs to the glycosyl hydrolase 3 family.

The protein resides in the secreted. It catalyses the reaction Hydrolysis of terminal, non-reducing beta-D-glucosyl residues with release of beta-D-glucose.. The protein operates within glycan metabolism; cellulose degradation. Its function is as follows. Beta-glucosidases are one of a number of cellulolytic enzymes involved in the degradation of cellulosic biomass. Catalyzes the last step releasing glucose from the inhibitory cellobiose. The sequence is that of Probable beta-glucosidase J (bglJ) from Emericella nidulans (strain FGSC A4 / ATCC 38163 / CBS 112.46 / NRRL 194 / M139) (Aspergillus nidulans).